Here is a 141-residue protein sequence, read N- to C-terminus: Large ribosomal subunit protein uL16 (141 aa).

Residues 1–23 (MLMPKRTKYRKQMKGRNRGKAHR) form a disordered region.

It belongs to the universal ribosomal protein uL16 family. Part of the 50S ribosomal subunit.

In terms of biological role, binds 23S rRNA and is also seen to make contacts with the A and possibly P site tRNAs. The chain is Large ribosomal subunit protein uL16 from Helicobacter acinonychis (strain Sheeba).